The chain runs to 61 residues: Furostanol glycoside 26-O-beta-glucosidase (61 aa).

Aspartate 33 serves as the catalytic Proton donor/acceptor. D-glucose is bound at residue aspartate 33.

Belongs to the glycosyl hydrolase 3 family. As to quaternary structure, monomer. In terms of processing, glycosylated. As to expression, expressed in petioles and leaves, but not in fruits.

The catalysed reaction is protodioscin + H2O = 26-deglucoprotodioscin + D-glucose. Inhibited by Hg(2+) and D-glucono-1,5-lactone. Its function is as follows. Beta-glucosidase highly specific for the cleavage of C-26-bound glucose moiety of furostanol glycosides torvosides A and H. Hydrolyzes only p-nitrophenyl-beta-glucoside, but not p-nitrophenyl-beta-D-fucoside, p-nitrophenyl-beta-L-fucoside, p-nitrophenyl-beta-D-xyloside, p-nitrophenyl-beta-D-galactoside, p-nitrophenyl-beta-D-NAc-glucosamine, p-nitrophenyl-beta-D-mannoside or any of the p-nitrophenyl-alpha-glycosides tested. The sequence is that of Furostanol glycoside 26-O-beta-glucosidase from Solanum torvum (Turkey berry).